We begin with the raw amino-acid sequence, 354 residues long: Mating-type protein MAT-1 (354 aa).

The segment at residues 60-117 (KAKKALNAFVGFRCYYIAIPAFKQWPMKKLSNLISLLWDRDPNKSLWSLMAKAWSNIR) is a DNA-binding region (alpha box).

The protein belongs to the MATALPHA1 family.

The protein resides in the nucleus. In terms of biological role, mating type proteins are sequence specific DNA-binding proteins that act as master switches in fungal differentiation by controlling gene expression in a cell type-specific fashion. Transcriptional activator that induces the transcription of alpha-specific genes. This is Mating-type protein MAT-1 (MAT1) from Cochliobolus cymbopogonis (Curvularia cymbopogonis).